The primary structure comprises 713 residues: Ribosomal RNA large subunit methyltransferase K/L (713 aa).

The THUMP domain maps to 46–157 (TAYRICLWSR…RDQATLSLDL (112 aa)).

It belongs to the methyltransferase superfamily. RlmKL family.

The protein resides in the cytoplasm. The catalysed reaction is guanosine(2445) in 23S rRNA + S-adenosyl-L-methionine = N(2)-methylguanosine(2445) in 23S rRNA + S-adenosyl-L-homocysteine + H(+). It carries out the reaction guanosine(2069) in 23S rRNA + S-adenosyl-L-methionine = N(2)-methylguanosine(2069) in 23S rRNA + S-adenosyl-L-homocysteine + H(+). Specifically methylates the guanine in position 2445 (m2G2445) and the guanine in position 2069 (m7G2069) of 23S rRNA. The protein is Ribosomal RNA large subunit methyltransferase K/L of Syntrophotalea carbinolica (strain DSM 2380 / NBRC 103641 / GraBd1) (Pelobacter carbinolicus).